Reading from the N-terminus, the 225-residue chain is Small ribosomal subunit protein L51-b (225 aa).

The transit peptide at 1-84 directs the protein to the mitochondrion; sequence MKFPDLLRCS…QCAFISSDRF (84 aa).

It belongs to the bacterial ribosomal protein bS1 family. Component of the mitochondrial small ribosomal subunit (mt-SSU). Mature yeast 74S mitochondrial ribosomes consist of a small (37S) and a large (54S) subunit. The 37S small subunit contains a 15S ribosomal RNA (15S mt-rRNA) and at least 32 different proteins. The 54S large subunit contains a 21S rRNA (21S mt-rRNA) and at least 45 different proteins. This subunit is mutually exclusive with mrp51/small ribosomal subunit protein bS1m.

It localises to the mitochondrion. In terms of biological role, component of the mitochondrial ribosome (mitoribosome), a dedicated translation machinery responsible for the synthesis of mitochondrial genome-encoded proteins, including at least some of the essential transmembrane subunits of the mitochondrial respiratory chain. The mitoribosomes are attached to the mitochondrial inner membrane and translation products are cotranslationally integrated into the membrane. Functionally interacts with the 5'-UTR of mitochondrial mRNAs. Specifically plays a role in the translation of cob1/cytochrome b and cox3. Has a role in meiosis. The protein is Small ribosomal subunit protein L51-b of Schizosaccharomyces pombe (strain 972 / ATCC 24843) (Fission yeast).